A 280-amino-acid polypeptide reads, in one-letter code: MVPKTGVSDRQENKLTQYFDDILRLSADLLTQQQLKTIKLDPKVTTGFSKAQQKGLGDRITQFYSLLDTLDVSLQTTADYVGAVKDSALQLKKQREEEQIKKQEQEKLERQLLEQQKLEQQQLEQKQLKQKQQQQQQQQQQQQQQQPQEQQHEQQQRYSAKNTPIDMLTNFDTDLPSAGITQAQSFNSEFGDLNGMDLSMFDSMDNQVGFGGLQNTSGGNEKKNDPQINFNDTNAPPSAVNVPENGNPSSYLTLNDFNDLGIDWNAANDNNELNLEDFNI.

The tract at residues 212 to 247 (GLQNTSGGNEKKNDPQINFNDTNAPPSAVNVPENGN) is disordered. A compositionally biased stretch (polar residues) spans 226 to 236 (PQINFNDTNAP).

This sequence belongs to the Mediator complex subunit 2 family. As to quaternary structure, component of the Mediator complex.

The protein localises to the nucleus. Component of the Mediator complex, a coactivator involved in the regulated transcription of nearly all RNA polymerase II-dependent genes. Mediator functions as a bridge to convey information from gene-specific regulatory proteins to the basal RNA polymerase II transcription machinery. Mediator is recruited to promoters by direct interactions with regulatory proteins and serves as a scaffold for the assembly of a functional preinitiation complex with RNA polymerase II and the general transcription factors. This is Mediator of RNA polymerase II transcription subunit 2 (MED2) from Kluyveromyces lactis (strain ATCC 8585 / CBS 2359 / DSM 70799 / NBRC 1267 / NRRL Y-1140 / WM37) (Yeast).